The primary structure comprises 344 residues: Uroporphyrinogen decarboxylase (344 aa).

Substrate is bound by residues 26-30 (RQAGR), Asp75, Tyr150, Ser205, and His323.

This sequence belongs to the uroporphyrinogen decarboxylase family. In terms of assembly, homodimer.

The protein resides in the cytoplasm. It carries out the reaction uroporphyrinogen III + 4 H(+) = coproporphyrinogen III + 4 CO2. It participates in porphyrin-containing compound metabolism; protoporphyrin-IX biosynthesis; coproporphyrinogen-III from 5-aminolevulinate: step 4/4. In terms of biological role, catalyzes the decarboxylation of four acetate groups of uroporphyrinogen-III to yield coproporphyrinogen-III. The chain is Uroporphyrinogen decarboxylase from Corynebacterium diphtheriae (strain ATCC 700971 / NCTC 13129 / Biotype gravis).